The primary structure comprises 106 residues: uncharacterized protein (106 aa).

A helical membrane pass occupies residues 85 to 101 (AVALVLLCVSHHLTYLP).

It is found in the membrane. This is an uncharacterized protein from Saccharomyces cerevisiae (strain ATCC 204508 / S288c) (Baker's yeast).